Here is a 210-residue protein sequence, read N- to C-terminus: Quaternary-amine-specific corrinoid protein (210 aa).

One can recognise a B12-binding N-terminal domain in the interval 1–90 (MADWKNLTQA…VLGSGDTAVA (90 aa)). In terms of domain architecture, B12-binding spans 90 to 210 (AGTILIGTAH…GVKICQAWVG (121 aa)). A methylcob(III)alamin-binding site is contributed by His103.

It belongs to the methylamine corrinoid protein family. As to quaternary structure, the proline betaine:THF methyl transfer system is composed of two methyltransferases, MtpB and MtqA, and the corrinoid protein MtqC. The L-carnitine:THF methyl transfer system is composed of two methyltransferases, MtcB and MtqA, and the corrinoid protein MtqC.

In terms of biological role, involved in the degradation of the quaternary amines L-proline betaine and L-carnitine. Component of a corrinoid-dependent methyltransferase system that transfers a methyl group from L-proline betaine or L-carnitine to tetrahydrofolate (THF), forming methyl-THF, a key intermediate in the Wood-Ljungdahl acetogenesis pathway. Acts as a methyl group carrier between MtpB or MtcB, and MtqA. A methyl group from L-proline betaine or L-carnitine is first transferred to the corrinoid prosthetic group of MtqC by MtpB or MtcB, respectively, and then transferred from MtqC to THF by MtqA. In Eubacterium limosum, this protein is Quaternary-amine-specific corrinoid protein.